Reading from the N-terminus, the 310-residue chain is tRNA dimethylallyltransferase (310 aa).

14 to 21 is a binding site for ATP; the sequence is GPTASGKS. 16–21 is a substrate binding site; sequence TASGKS. Interaction with substrate tRNA stretches follow at residues 39 to 42 and 163 to 167; these read DSMQ and QRIVR.

This sequence belongs to the IPP transferase family. In terms of assembly, monomer. Mg(2+) serves as cofactor.

It catalyses the reaction adenosine(37) in tRNA + dimethylallyl diphosphate = N(6)-dimethylallyladenosine(37) in tRNA + diphosphate. Its function is as follows. Catalyzes the transfer of a dimethylallyl group onto the adenine at position 37 in tRNAs that read codons beginning with uridine, leading to the formation of N6-(dimethylallyl)adenosine (i(6)A). This is tRNA dimethylallyltransferase from Brucella melitensis biotype 2 (strain ATCC 23457).